The primary structure comprises 450 residues: Tripartite motif-containing protein 64C (450 aa).

The segment at 15 to 56 (CCICVNYFIDPVTTDCVHSFCRPCLCLCSEEGRAPMRCPLCR) adopts an RING-type zinc-finger fold. The B box-type zinc-finger motif lies at 87–128 (SSDNICVLHEETKELFCEADKRLLCGPCSESPEHMAHSHSPI). Zn(2+) contacts are provided by Cys92, His95, Cys114, and His120. The stretch at 191-218 (DEEEQRHLQALEREAKELFQQLQDSQVR) forms a coiled coil. Residues 269-450 (ELTSWCITGV…LRPFFCFGCT (182 aa)) enclose the B30.2/SPRY domain.

It belongs to the TRIM/RBCC family.

The polypeptide is Tripartite motif-containing protein 64C (TRIM64C) (Homo sapiens (Human)).